Here is a 766-residue protein sequence, read N- to C-terminus: Nucleolar complex protein 2 (766 aa).

Positions 1–12 are enriched in basic residues; the sequence is MKLATKKIKTLG. Disordered regions lie at residues 1–73, 100–154, and 674–766; these read MKLA…EELE, DTDD…DEED, and KTGV…LNEW. A compositionally biased stretch (basic and acidic residues) spans 14–29; it reads SKPDLSKKKPAKDAIR. The segment covering 33–42 has biased composition (polar residues); sequence PQTTSETKVT. Basic residues predominate over residues 58-67; the sequence is KTTKKGFKKS. Positions 100 to 115 are enriched in acidic residues; the sequence is DTDDDDDEEGDEEDKE. T101 bears the Phosphothreonine mark. The span at 130–140 shows a compositional bias: basic and acidic residues; that stretch reads EKYHKPSKDLE. The span at 141-154 shows a compositional bias: acidic residues; it reads VASDESDFEVDEED. 5 positions are modified to phosphoserine: S143, S146, S691, S693, and S705. Residues 706-720 show a composition bias toward acidic residues; the sequence is DDDDDEDVQEEEEVE. The span at 757 to 766 shows a compositional bias: basic and acidic residues; sequence IVKDLDLNEW.

It belongs to the NOC2 family.

Its subcellular location is the nucleus. This is Nucleolar complex protein 2 from Drosophila melanogaster (Fruit fly).